We begin with the raw amino-acid sequence, 36 residues long: Photosystem I reaction center subunit VIII (36 aa).

Residues 9–29 (ILVPLVGLIFPALSMALLFIY) traverse the membrane as a helical segment.

This sequence belongs to the PsaI family.

It is found in the plastid. The protein resides in the chloroplast thylakoid membrane. Functionally, may help in the organization of the PsaL subunit. This is Photosystem I reaction center subunit VIII from Pyropia yezoensis (Susabi-nori).